A 437-amino-acid chain; its full sequence is U1 small nuclear ribonucleoprotein 70 kDa (437 aa).

At Thr-2 the chain carries N-acetylthreonine. Residues 48–79 (FEDPRDAPPPTRAETREERMERKRREKIERRQ) form a disordered region. Positions 60-79 (AETREERMERKRREKIERRQ) are enriched in basic and acidic residues. The segment at 92 to 202 (HNDPNAQGDA…GGGLGGTRRG (111 aa)) is required for interaction with U1 RNA. Positions 103 to 181 (KTLFVARVNY…RRVLVDVERG (79 aa)) constitute an RRM domain. At Lys-118 the chain carries N6-acetyllysine. Tyr-126 is modified (phosphotyrosine). The segment at 187–437 (WRPRRLGGGL…NGYLMEAAPE (251 aa)) is disordered. The span at 192–201 (LGGGLGGTRR) shows a compositional bias: gly residues. The span at 207–254 (NIRHSGRDDTSRYDERPGPSPLPHRDRDRDRERERRERSRERDKERER) shows a compositional bias: basic and acidic residues. Phosphoserine occurs at positions 226 and 268. Positions 255–268 (RRSRSRDRRRRSRS) are enriched in basic residues. 2 stretches are compositionally biased toward basic and acidic residues: residues 269-286 (RDKEERRRSRERSKDKDR) and 294-310 (RSRERARRERERKEELR). At Ser-320 the chain carries Phosphoserine. A compositionally biased stretch (basic and acidic residues) spans 343–393 (PEEKGRDRDRERRRSHRSERERRRDRDRDRDRDREHKRGERGSERGRDEAR). Residue Lys-346 forms a Glycyl lysine isopeptide (Lys-Gly) (interchain with G-Cter in SUMO2) linkage. Ser-410 is modified (phosphoserine).

As to quaternary structure, component of the U1 snRNP. The U1 snRNP is composed of the U1 snRNA and the 7 core Sm proteins SNRPB, SNRPD1, SNRPD2, SNRPD3, SNRPE, SNRPF and SNRPG that assemble in a heptameric protein ring on the Sm site of the small nuclear RNA to form the core snRNP, and at least three U1 snRNP-specific proteins SNRNP70/U1-70K, SNRPA/U1-A and SNRPC/U1-C. Interacts with SCNM1. Found in a pre-mRNA splicing complex with SFRS4, SFRS5, SNRNP70, SNRPA1, SRRM1 and SRRM2. Found in a pre-mRNA exonic splicing enhancer (ESE) complex with SNRNP70, SNRPA1, SRRM1 and TRA2B/SFRS10. Interacts with dephosphorylated SFRS13A and SFPQ. Interacts with NUDT21/CPSF5, CPSF6, SCAF11, and ZRANB2. Interacts with GEMIN5. Interacts with FUS. Post-translationally, the N-terminus is blocked. In terms of processing, extensively phosphorylated on serine residues in the C-terminal region.

It localises to the nucleus speckle. The protein localises to the nucleus. Its subcellular location is the nucleoplasm. Component of the spliceosomal U1 snRNP, which is essential for recognition of the pre-mRNA 5' splice-site and the subsequent assembly of the spliceosome. SNRNP70 binds to the loop I region of U1-snRNA. Functionally, truncated isoforms that lack the RRM domain cannot bind U1-snRNA. The sequence is that of U1 small nuclear ribonucleoprotein 70 kDa (SNRNP70) from Homo sapiens (Human).